The following is a 985-amino-acid chain: DNA ligase 4 (985 aa).

Disordered regions lie at residues 1–27 and 43–70; these read MDRL…RNKH and LNGN…QTLS. The span at 10–20 shows a compositional bias: basic and acidic residues; that stretch reads ETERELDEKYP. A compositionally biased stretch (basic residues) spans 46–61; sequence NKKRPTGPAAARKKLG. 10 residues coordinate ATP: Glu310, Lys312, Leu313, Arg317, Glu379, Phe420, Glu480, Lys485, Lys502, and Lys504. Lys312 functions as the N6-AMP-lysine intermediate in the catalytic mechanism. Glu379 serves as a coordination point for Mg(2+). Glu480 contacts Mg(2+). BRCT domains are found at residues 711 to 804 and 878 to 983; these read PSGH…PDLL and LRGW…RFAP.

Belongs to the ATP-dependent DNA ligase family. Mg(2+) is required as a cofactor.

It is found in the nucleus. The enzyme catalyses ATP + (deoxyribonucleotide)n-3'-hydroxyl + 5'-phospho-(deoxyribonucleotide)m = (deoxyribonucleotide)n+m + AMP + diphosphate.. Functionally, DNA ligase involved in DNA non-homologous end joining (NHEJ); required for double-strand break (DSB) repair. The chain is DNA ligase 4 (LIG4) from Coccidioides immitis (strain RS) (Valley fever fungus).